The sequence spans 175 residues: uncharacterized protein (175 aa).

The N-terminal 11 residues, 1–11 (METWRKGSFRN), are a transit peptide targeting the mitochondrion. The segment at 24-92 (RRLRRQSSVL…PRLYRESSSC (69 aa)) is disordered. Positions 41-63 (GDHEEYSNREVIRELQGRPDGRR) are enriched in basic and acidic residues.

The protein localises to the mitochondrion. This is an uncharacterized protein from Homo sapiens (Human).